The chain runs to 320 residues: Arabinan endo-1,5-alpha-L-arabinosidase C (320 aa).

An N-terminal signal peptide occupies residues 1 to 15; that stretch reads MKLALSLFLLSGSLA. D31 serves as the catalytic Proton acceptor. Residues N126 and N190 are each glycosylated (N-linked (GlcNAc...) asparagine). E198 (proton donor) is an active-site residue.

Belongs to the glycosyl hydrolase 43 family.

The protein localises to the secreted. It carries out the reaction Endohydrolysis of (1-&gt;5)-alpha-arabinofuranosidic linkages in (1-&gt;5)-arabinans.. It participates in glycan metabolism; L-arabinan degradation. Functionally, endo-1,5-alpha-L-arabinanase involved in degradation of pectin. Its preferred substrate is linear 1,5-alpha-L-arabinan. This Emericella nidulans (strain FGSC A4 / ATCC 38163 / CBS 112.46 / NRRL 194 / M139) (Aspergillus nidulans) protein is Arabinan endo-1,5-alpha-L-arabinosidase C (abnC).